The following is a 156-amino-acid chain: Small ribosomal subunit protein uS7 (156 aa).

It belongs to the universal ribosomal protein uS7 family. As to quaternary structure, part of the 30S ribosomal subunit. Contacts proteins S9 and S11.

Functionally, one of the primary rRNA binding proteins, it binds directly to 16S rRNA where it nucleates assembly of the head domain of the 30S subunit. Is located at the subunit interface close to the decoding center, probably blocks exit of the E-site tRNA. In Synechococcus sp. (strain WH7803), this protein is Small ribosomal subunit protein uS7.